The following is a 444-amino-acid chain: Homogentisate 1,2-dioxygenase (444 aa).

His-298 acts as the Proton acceptor in catalysis. Positions 341 and 347 each coordinate Fe cation. Positions 356 and 377 each coordinate homogentisate. His-377 is a Fe cation binding site.

This sequence belongs to the homogentisate dioxygenase family. As to quaternary structure, hexamer; dimer of trimers. The cofactor is Fe cation.

It catalyses the reaction homogentisate + O2 = 4-maleylacetoacetate + H(+). It functions in the pathway amino-acid degradation; L-phenylalanine degradation; acetoacetate and fumarate from L-phenylalanine: step 4/6. Its function is as follows. Involved in the catabolism of homogentisate (2,5-dihydroxyphenylacetate or 2,5-OH-PhAc), a central intermediate in the degradation of phenylalanine and tyrosine. Catalyzes the oxidative ring cleavage of the aromatic ring of homogentisate to yield maleylacetoacetate. This chain is Homogentisate 1,2-dioxygenase, found in Burkholderia orbicola (strain AU 1054).